The chain runs to 232 residues: LexA repressor (232 aa).

Residues 1-25 are disordered; it reads MSDDSSDSTDAPGTSRSRDSGLTER. Residues 16-25 show a composition bias toward basic and acidic residues; sequence RSRDSGLTER. Residues 46-66 constitute a DNA-binding region (H-T-H motif); that stretch reads IREIGDAVGLTSTSSVAHQLR. Catalysis depends on for autocatalytic cleavage activity residues S156 and K193.

Belongs to the peptidase S24 family. Homodimer.

It catalyses the reaction Hydrolysis of Ala-|-Gly bond in repressor LexA.. Functionally, represses a number of genes involved in the response to DNA damage (SOS response), including recA and lexA. In the presence of single-stranded DNA, RecA interacts with LexA causing an autocatalytic cleavage which disrupts the DNA-binding part of LexA, leading to derepression of the SOS regulon and eventually DNA repair. This Mycolicibacterium gilvum (strain PYR-GCK) (Mycobacterium gilvum (strain PYR-GCK)) protein is LexA repressor.